The primary structure comprises 403 residues: Succinoglycan biosynthesis protein ExoL (403 aa).

It is found in the cytoplasm. Its pathway is glycan metabolism; exopolysaccharide biosynthesis. In terms of biological role, essential for succinoglycan (EPS I) synthesis and nodule infection. Glycosyltransferase needed for the addition of the third sugar (glucose), catalyzes the formation of a beta-1,4 linkage between the second and third sugars. The chain is Succinoglycan biosynthesis protein ExoL (exoL) from Rhizobium meliloti (strain 1021) (Ensifer meliloti).